The primary structure comprises 676 residues: RNA helicase NPH-II (676 aa).

The Helicase ATP-binding domain occupies 172–347 (FSAWISHRPV…VFLPNPAFIH (176 aa)). Position 185–192 (185–192 (GGTGVGKT)) interacts with ATP. Positions 296–299 (DEVH) match the DEXH box motif. In terms of domain architecture, Helicase C-terminal spans 366-535 (NPSSRMAYIE…NYILYANKFN (170 aa)).

This sequence belongs to the DEAD box helicase family. DEAH subfamily. Monomer.

The protein localises to the virion. It carries out the reaction ATP + H2O = ADP + phosphate + H(+). NTP-dependent helicase that catalyzes unidirectional unwinding of 3'tailed duplex RNAs and plays an important role during transcription of early mRNAs, presumably by preventing R-loop formation behind the elongating RNA polymerase. Might also play a role in the export of newly synthesized mRNA chains out of the core into the cytoplasm. Required for replication and propagation of viral particles. This chain is RNA helicase NPH-II (OPG084), found in Vaccinia virus (strain Ankara) (VACV).